A 47-amino-acid polypeptide reads, in one-letter code: Delta-actitoxin-Axm1d (47 aa).

Intrachain disulfides connect Cys4–Cys44, Cys6–Cys34, and Cys27–Cys45.

Belongs to the sea anemone sodium channel inhibitory toxin family. Type I subfamily.

The protein resides in the secreted. It is found in the nematocyst. Functionally, binds specifically to voltage-gated sodium channels (Nav), thereby delaying their inactivation during signal transduction. Thus it strongly stimulates mammalian cardiac muscle contraction. In Anthopleura xanthogrammica (Giant green sea anemone), this protein is Delta-actitoxin-Axm1d.